Reading from the N-terminus, the 60-residue chain is Large ribosomal subunit protein uL30 (60 aa).

This sequence belongs to the universal ribosomal protein uL30 family. In terms of assembly, part of the 50S ribosomal subunit.

The chain is Large ribosomal subunit protein uL30 from Shewanella sp. (strain ANA-3).